A 215-amino-acid chain; its full sequence is tRNA (guanine-N(7)-)-methyltransferase (215 aa).

E44, E69, D96, and D118 together coordinate S-adenosyl-L-methionine. The active site involves D118. K122 contacts substrate. Residues 124 to 129 form an interaction with RNA region; it reads RHEKRR. Substrate contacts are provided by residues D154 and 192–195; that span reads TEYE.

This sequence belongs to the class I-like SAM-binding methyltransferase superfamily. TrmB family.

The enzyme catalyses guanosine(46) in tRNA + S-adenosyl-L-methionine = N(7)-methylguanosine(46) in tRNA + S-adenosyl-L-homocysteine. The protein operates within tRNA modification; N(7)-methylguanine-tRNA biosynthesis. Catalyzes the formation of N(7)-methylguanine at position 46 (m7G46) in tRNA. The sequence is that of tRNA (guanine-N(7)-)-methyltransferase from Limosilactobacillus fermentum (strain NBRC 3956 / LMG 18251) (Lactobacillus fermentum).